Consider the following 156-residue polypeptide: Small ribosomal subunit protein uS7 (156 aa).

Belongs to the universal ribosomal protein uS7 family. As to quaternary structure, part of the 30S ribosomal subunit. Contacts proteins S9 and S11.

One of the primary rRNA binding proteins, it binds directly to 16S rRNA where it nucleates assembly of the head domain of the 30S subunit. Is located at the subunit interface close to the decoding center, probably blocks exit of the E-site tRNA. In Histophilus somni (strain 129Pt) (Haemophilus somnus), this protein is Small ribosomal subunit protein uS7.